We begin with the raw amino-acid sequence, 214 residues long: Phosphatidyl-N-methylethanolamine N-methyltransferase (214 aa).

Residues 1–19 (MPLVALGVADLFNFVDYSK) lie on the Lumenal side of the membrane. Residues 20 to 40 (TSLAISAAAIAFNPTFWNIVA) constitute an intramembrane region (helical). Topologically, residues 41–52 (RREYRTKFLTRA) are lumenal. The helical transmembrane segment at 53 to 74 (FGGNAQVACYFLAVTIFGLGLV) threads the bilayer. Topologically, residues 75-101 (RDFLYERALRDQPSHPLLEGTYVKYAA) are cytoplasmic. Residues 102 to 122 (YALLALGNLLVITSTMRLGIT) traverse the membrane as a helical segment. 106–108 (ALG) serves as a coordination point for S-adenosyl-L-methionine. The Lumenal segment spans residues 123 to 165 (GTFLGDYFGILMDGIVTGFPFNVTSAPMYYGSTMSFLGTALLY). The chain crosses the membrane as a helical span at residues 166-186 (GKPAGLLLTAWVLFVYIIAIQ). Over 187-214 (FENPFTAEIYAKRDRERAKAAGTSKKEL) the chain is Cytoplasmic. 188–189 (EN) serves as a coordination point for S-adenosyl-L-methionine.

Belongs to the class VI-like SAM-binding methyltransferase superfamily. PEMT/PEM2 methyltransferase family.

Its subcellular location is the endoplasmic reticulum membrane. The protein localises to the mitochondrion membrane. The catalysed reaction is a 1,2-diacyl-sn-glycero-3-phospho-N-methylethanolamine + S-adenosyl-L-methionine = a 1,2-diacyl-sn-glycero-3-phospho-N,N-dimethylethanolamine + S-adenosyl-L-homocysteine + H(+). It carries out the reaction a 1,2-diacyl-sn-glycero-3-phospho-N,N-dimethylethanolamine + S-adenosyl-L-methionine = a 1,2-diacyl-sn-glycero-3-phosphocholine + S-adenosyl-L-homocysteine + H(+). Its pathway is phospholipid metabolism; phosphatidylcholine biosynthesis. Catalyzes the second two steps of the methylation pathway of phosphatidylcholine biosynthesis, the SAM-dependent methylation of phosphatidylmonomethylethanolamine (PMME) to phosphatidyldimethylethanolamine (PDME) and of PDME to phosphatidylcholine (PC). This Neurospora crassa (strain ATCC 24698 / 74-OR23-1A / CBS 708.71 / DSM 1257 / FGSC 987) protein is Phosphatidyl-N-methylethanolamine N-methyltransferase.